Consider the following 249-residue polypeptide: tRNA (guanine-N(1)-)-methyltransferase (249 aa).

S-adenosyl-L-methionine is bound by residues G117 and 137-142 (LGDFVL).

It belongs to the RNA methyltransferase TrmD family. Homodimer.

Its subcellular location is the cytoplasm. It carries out the reaction guanosine(37) in tRNA + S-adenosyl-L-methionine = N(1)-methylguanosine(37) in tRNA + S-adenosyl-L-homocysteine + H(+). Its function is as follows. Specifically methylates guanosine-37 in various tRNAs. The protein is tRNA (guanine-N(1)-)-methyltransferase of Janthinobacterium sp. (strain Marseille) (Minibacterium massiliensis).